The following is a 547-amino-acid chain: CTP synthase (547 aa).

The tract at residues 1–265 (MARFVFITGG…DQAVLDAFSI (265 aa)) is amidoligase domain. Ser13 provides a ligand contact to CTP. Ser13 contributes to the UTP binding site. ATP-binding positions include 14 to 19 (SLGKGL) and Asp71. 2 residues coordinate Mg(2+): Asp71 and Glu139. Residues 146–148 (DIE), 186–191 (KTKPTQ), and Lys222 contribute to the CTP site. UTP-binding positions include 186 to 191 (KTKPTQ) and Lys222. A Glutamine amidotransferase type-1 domain is found at 291–546 (NVAIVGKYTQ…VRAAKEVSRL (256 aa)). Position 353 (Gly353) interacts with L-glutamine. The Nucleophile; for glutamine hydrolysis role is filled by Cys380. L-glutamine-binding positions include 381-384 (LGMQ), Glu404, and Arg474. Residues His519 and Glu521 contribute to the active site.

It belongs to the CTP synthase family. Homotetramer.

It carries out the reaction UTP + L-glutamine + ATP + H2O = CTP + L-glutamate + ADP + phosphate + 2 H(+). The catalysed reaction is L-glutamine + H2O = L-glutamate + NH4(+). The enzyme catalyses UTP + NH4(+) + ATP = CTP + ADP + phosphate + 2 H(+). The protein operates within pyrimidine metabolism; CTP biosynthesis via de novo pathway; CTP from UDP: step 2/2. Its activity is regulated as follows. Allosterically activated by GTP, when glutamine is the substrate; GTP has no effect on the reaction when ammonia is the substrate. The allosteric effector GTP functions by stabilizing the protein conformation that binds the tetrahedral intermediate(s) formed during glutamine hydrolysis. Inhibited by the product CTP, via allosteric rather than competitive inhibition. Functionally, catalyzes the ATP-dependent amination of UTP to CTP with either L-glutamine or ammonia as the source of nitrogen. Regulates intracellular CTP levels through interactions with the four ribonucleotide triphosphates. This is CTP synthase from Dinoroseobacter shibae (strain DSM 16493 / NCIMB 14021 / DFL 12).